The primary structure comprises 119 residues: Large ribosomal subunit protein bL20 (119 aa).

The protein belongs to the bacterial ribosomal protein bL20 family.

Binds directly to 23S ribosomal RNA and is necessary for the in vitro assembly process of the 50S ribosomal subunit. It is not involved in the protein synthesizing functions of that subunit. This Ruthia magnifica subsp. Calyptogena magnifica protein is Large ribosomal subunit protein bL20.